The sequence spans 141 residues: MASEKDDGPALPKLDDDNQTAENTCKPAEEQPQQLRWDDIHLPRFSLKQGMIPTRYVMPWKENMKFRNVNLQQAEACGIYAGPLEDSLFWGYSERLCHGEDRKAVLKKGLPEIKITDMPLHSPLSRYQSTVISHGFRRRLI.

A compositionally biased stretch (basic and acidic residues) spans 1 to 16 (MASEKDDGPALPKLDD). Residues 1–33 (MASEKDDGPALPKLDDDNQTAENTCKPAEEQPQ) are disordered.

As to quaternary structure, microtubule inner protein component of sperm flagellar doublet microtubules. In terms of tissue distribution, expressed predominantly in the testis.

It localises to the cytoplasm. Its subcellular location is the cytoskeleton. The protein localises to the flagellum axoneme. Its function is as follows. Microtubule inner protein (MIP) part of the dynein-decorated doublet microtubules (DMTs) in flagellum axoneme, which is required for flagellum beating. May serve to reinforce and thus stabilize the microtubule structure in the sperm flagella. Involved in the regulation of sperm motility. This is Sperm-associated microtubule inner protein 10 (Spmip10) from Mus musculus (Mouse).